Consider the following 541-residue polypeptide: Eukaryotic translation initiation factor 3 subunit E (541 aa).

The region spanning 252–443 (VEMFLSPVYL…GMVFMNPTHP (192 aa)) is the PCI domain. Positions 466-541 (AIDRKAHPPS…QQPAQAIAAN (76 aa)) are disordered. Gly residues predominate over residues 490–502 (NAGGRGGRGGQRN). Over residues 506–522 (QRDRSHAHNNEAKREGE) the composition is skewed to basic and acidic residues. Residues 523 to 541 (SASAEEAQQQQPAQAIAAN) are compositionally biased toward low complexity.

It belongs to the eIF-3 subunit E family. As to quaternary structure, component of the eukaryotic translation initiation factor 3 (eIF-3) complex.

It is found in the cytoplasm. Functionally, component of the eukaryotic translation initiation factor 3 (eIF-3) complex, which is involved in protein synthesis of a specialized repertoire of mRNAs and, together with other initiation factors, stimulates binding of mRNA and methionyl-tRNAi to the 40S ribosome. The eIF-3 complex specifically targets and initiates translation of a subset of mRNAs involved in cell proliferation. The polypeptide is Eukaryotic translation initiation factor 3 subunit E (Mycosarcoma maydis (Corn smut fungus)).